Reading from the N-terminus, the 258-residue chain is 5'-nucleotidase SurE (258 aa).

A divalent metal cation-binding residues include Asp-9, Asp-10, Ser-42, and Asn-95.

The protein belongs to the SurE nucleotidase family. It depends on a divalent metal cation as a cofactor.

It localises to the cytoplasm. It carries out the reaction a ribonucleoside 5'-phosphate + H2O = a ribonucleoside + phosphate. Its function is as follows. Nucleotidase that shows phosphatase activity on nucleoside 5'-monophosphates. This chain is 5'-nucleotidase SurE, found in Campylobacter concisus (strain 13826).